The primary structure comprises 328 residues: DhaKLM operon coactivator DhaQ (328 aa).

The DhaK domain occupies 6 to 328 (STNEIPEEML…LNVPTGAFAW (323 aa)). Tele-(1,2,3-trihydroxypropan-2-yl)histidine is present on His215.

Homodimer. Interacts with a homodimer of DhaS.

In terms of biological role, coactivator for the transcription factor DhaS. The heterotetramer formed by DhaQ and DhaS functions as a transcriptional regulator. Activated by covalent binding of dihydroxyacetone to DhaQ. The complex activates the dhaKLM operon. The polypeptide is DhaKLM operon coactivator DhaQ (dhaQ) (Lactococcus lactis subsp. lactis (strain IL1403) (Streptococcus lactis)).